The following is a 3344-amino-acid chain: Genome polyprotein (3344 aa).

The region spanning 408 to 547 (IVGNSKINYI…RSVYAKMDQY (140 aa)) is the Peptidase S30 domain. Catalysis depends on for P1 proteinase activity residues H456, D465, and S499. The short motif at 598–601 (KITC) is the Involved in interaction with stylet and aphid transmission element. The Involved in virions binding and aphid transmission motif lies at 856–858 (PTK). Positions 882–1004 (MYIAKKGYCY…DSEMKHYIVG (123 aa)) constitute a Peptidase C6 domain. Residues C890 and H963 each act as for helper component proteinase activity in the active site. The region spanning 1473–1625 (EIAHSPEREF…TQFPTKIVTE (153 aa)) is the Helicase ATP-binding domain. Residue 1486 to 1493 (GAVGSGKS) coordinates ATP. A DECH box motif is present at residues 1575 to 1578 (DECH). Residues 1644–1803 (DVTAFADNIL…GLPVMTHNVG (160 aa)) enclose the Helicase C-terminal domain. The Nuclear localization signal signature appears at 2134 to 2141 (KKGNKKGK). At Y2156 the chain carries O-(5'-phospho-RNA)-tyrosine. Positions 2283-2499 (GKSLCQGMRN…LSWGALKVWE (217 aa)) constitute a Peptidase C4 domain. Residues H2327, D2362, and C2431 each act as for nuclear inclusion protein A activity in the active site. In terms of domain architecture, RdRp catalytic spans 2761–2885 (WVYCDADGSQ…AIHPDHEHVL (125 aa)). Residues 3059–3093 (KNEAVDAGLNEKLKEKEKQKEKEKEKQKEKEKDGA) show a composition bias toward basic and acidic residues. The segment at 3059–3116 (KNEAVDAGLNEKLKEKEKQKEKEKEKQKEKEKDGASDGNDVSTSTKTGERDRDVNVGT) is disordered.

The protein belongs to the potyviridae genome polyprotein family. Interacts with host eIF4E protein (via cap-binding region); this interaction mediates the translation of the VPg-viral RNA conjugates. Part of a complex that comprises VPg, RNA, host EIF4E and EIF4G; this interaction mediates the translation of the VPg-viral RNA conjugates. VPg is uridylylated by the polymerase and is covalently attached to the 5'-end of the genomic RNA. This uridylylated form acts as a nucleotide-peptide primer for the polymerase. Post-translationally, potyviral RNA is expressed as two polyproteins which undergo post-translational proteolytic processing. Genome polyprotein is processed by NIa-pro, P1 and HC-pro proteinases resulting in the production of at least ten individual proteins. P3N-PIPO polyprotein is cleaved by P1 and HC-pro proteinases resulting in the production of three individual proteins. The P1 proteinase and the HC-pro cleave only their respective C-termini autocatalytically. 6K1 is essential for proper proteolytic separation of P3 from CI.

Its subcellular location is the host cytoplasmic vesicle. It localises to the host nucleus. It is found in the virion. It catalyses the reaction RNA(n) + a ribonucleoside 5'-triphosphate = RNA(n+1) + diphosphate. The catalysed reaction is Hydrolyzes glutaminyl bonds, and activity is further restricted by preferences for the amino acids in P6 - P1' that vary with the species of potyvirus, e.g. Glu-Xaa-Xaa-Tyr-Xaa-Gln-|-(Ser or Gly) for the enzyme from tobacco etch virus. The natural substrate is the viral polyprotein, but other proteins and oligopeptides containing the appropriate consensus sequence are also cleaved.. The enzyme catalyses Hydrolyzes a Gly-|-Gly bond at its own C-terminus, commonly in the sequence -Tyr-Xaa-Val-Gly-|-Gly, in the processing of the potyviral polyprotein.. Required for aphid transmission and also has proteolytic activity. Only cleaves a Gly-Gly dipeptide at its own C-terminus. Interacts with virions and aphid stylets. Acts as a suppressor of RNA-mediated gene silencing, also known as post-transcriptional gene silencing (PTGS), a mechanism of plant viral defense that limits the accumulation of viral RNAs. May have RNA-binding activity. Functionally, has helicase activity. It may be involved in replication. Its function is as follows. Indispensable for virus replication. In terms of biological role, mediates the cap-independent, EIF4E-dependent translation of viral genomic RNAs. Binds to the cap-binding site of host EIF4E and thus interferes with the host EIF4E-dependent mRNA export and translation. VPg-RNA directly binds EIF4E and is a template for transcription. Also forms trimeric complexes with EIF4E-EIF4G, which are templates for translation. Has RNA-binding and proteolytic activities. Functionally, an RNA-dependent RNA polymerase that plays an essential role in the virus replication. Its function is as follows. Involved in aphid transmission, cell-to-cell and systemis movement, encapsidation of the viral RNA and in the regulation of viral RNA amplification. In Carica papaya (Papaya), this protein is Genome polyprotein.